The chain runs to 506 residues: Lysine--tRNA ligase (506 aa).

2 residues coordinate Mg(2+): Glu-416 and Glu-423.

This sequence belongs to the class-II aminoacyl-tRNA synthetase family. In terms of assembly, homodimer. Requires Mg(2+) as cofactor.

The protein resides in the cytoplasm. The enzyme catalyses tRNA(Lys) + L-lysine + ATP = L-lysyl-tRNA(Lys) + AMP + diphosphate. The sequence is that of Lysine--tRNA ligase from Xylella fastidiosa (strain M23).